Consider the following 64-residue polypeptide: Conotoxin Cal6.24 (64 aa).

The first 22 residues, 1-22, serve as a signal peptide directing secretion; sequence MKLTCVMIVAVLVLTVCKVVTS. 3 disulfides stabilise this stretch: C32-C50, C40-C54, and C49-C60.

In terms of tissue distribution, expressed by the venom duct.

The protein resides in the secreted. Its function is as follows. Probable neurotoxin. The protein is Conotoxin Cal6.24 of Californiconus californicus (California cone).